Here is a 102-residue protein sequence, read N- to C-terminus: MQNQKIRIRLKAFDYRLIDKSAVEIVETAKRTGAVVKGPVPLPTRIERFDVLRSPHVNKTSRDQFEIRTHLRLMDIIDPTDKTVDALMKLDLPAGVDVEIKL.

It belongs to the universal ribosomal protein uS10 family. Part of the 30S ribosomal subunit.

In terms of biological role, involved in the binding of tRNA to the ribosomes. This is Small ribosomal subunit protein uS10 from Nitrosomonas eutropha (strain DSM 101675 / C91 / Nm57).